A 428-amino-acid chain; its full sequence is MNKGPRHRPKFLSKKGKKLRIMVAGSSYTSYQACINSLCSKQILEAETEIDPLKAHIDRILEIREFNADILEDEFHVDLTVIEVNGFGDKIDNSASFEVVTHYLESQFDQALIEESKIKRNSKFTDTRVDALLYFIAPRGHCLSEFDLEAMKRFSKRVNVIPVIGNSNAFTEEELKNFKDVIMKDLKQCNIKVFDFPWDPEEDEDEVIEDNKRLWESVPFAVSGGVSEEDEEGYQRIVKKFQWGTFVIDDPAHSDFLNLKTVLFISHLDILKSITKQTYYENYRTEKLSNDSPSNTSLSLQKQNSIVANEDKRSVNGSERTETRSSIDQSEMRTNVSDSTKSEELKKINSIKVDNTSSLKCDSYGNTKTKTNQLNCEQIGLEVISPKEFPHRTTSSRNSLPNNTTKELEMKKMDDLSHERYENLPFYR.

The Septin-type G domain occupies 15–290; the sequence is KGKKLRIMVA…ENYRTEKLSN (276 aa). Residues 25–32 form a G1 motif region; the sequence is GSSYTSYQ. Residues 25-32, glycine 86, 166-174, and glycine 224 each bind GTP; these read GSSYTSYQ and NSNAFTEEE. Residues 83–86 form a G3 motif region; it reads EVNG. A G4 motif region spans residues 165–168; sequence GNSN. Disordered regions lie at residues 287–345 and 387–414; these read KLSN…SEEL and KEFP…KKMD. Polar residues predominate over residues 290–307; the sequence is NDSPSNTSLSLQKQNSIV. Residues 309–325 are compositionally biased toward basic and acidic residues; that stretch reads NEDKRSVNGSERTETRS. Polar residues-rich tracts occupy residues 326-339 and 392-405; these read SIDQ…VSDS and RTTS…NNTT.

Belongs to the TRAFAC class TrmE-Era-EngA-EngB-Septin-like GTPase superfamily. Septin GTPase family. As to quaternary structure, component of the sporulation-specific septin complex composed of at least spn2, spn5, spn6 and spn7.

It is found in the cytoplasm. Its subcellular location is the nucleus. It localises to the forespore membrane. Septin-like protein involved in the correct orientation of forespore membrane extension during sporulation. Binds phosphatidylinositol 4-phosphate. The polypeptide is Septin homolog spn7 (spn7) (Schizosaccharomyces pombe (strain 972 / ATCC 24843) (Fission yeast)).